The primary structure comprises 512 residues: Maturase K (512 aa).

This sequence belongs to the intron maturase 2 family. MatK subfamily.

It is found in the plastid. The protein localises to the chloroplast. Usually encoded in the trnK tRNA gene intron. Probably assists in splicing its own and other chloroplast group II introns. This Wolffiella gladiata (Florida mud-midget) protein is Maturase K.